The primary structure comprises 34 residues: Photosystem II reaction center protein M (34 aa).

Residues 5–25 (ILAFIATALFILIPTAFSLIL) form a helical membrane-spanning segment.

Belongs to the PsbM family. As to quaternary structure, PSII is composed of 1 copy each of membrane proteins PsbA, PsbB, PsbC, PsbD, PsbE, PsbF, PsbH, PsbI, PsbJ, PsbK, PsbL, PsbM, PsbT, PsbX, PsbY, PsbZ, Psb30/Ycf12, at least 3 peripheral proteins of the oxygen-evolving complex and a large number of cofactors. It forms dimeric complexes.

The protein localises to the plastid. The protein resides in the chloroplast thylakoid membrane. Functionally, one of the components of the core complex of photosystem II (PSII). PSII is a light-driven water:plastoquinone oxidoreductase that uses light energy to abstract electrons from H(2)O, generating O(2) and a proton gradient subsequently used for ATP formation. It consists of a core antenna complex that captures photons, and an electron transfer chain that converts photonic excitation into a charge separation. This subunit is found at the monomer-monomer interface. The chain is Photosystem II reaction center protein M from Huperzia lucidula (Shining clubmoss).